A 592-amino-acid chain; its full sequence is Alanine aminotransferase, mitochondrial (592 aa).

The transit peptide at 1–64 (MLSLSAKNHF…RKVRPVLQRH (64 aa)) directs the protein to the mitochondrion. Position 77 is a phosphoserine (serine 77). Pyridoxal 5'-phosphate-binding residues include alanine 258, serine 259, tyrosine 284, asparagine 340, and serine 409. Lysine 412 bears the N6-(pyridoxal phosphate)lysine mark. Arginine 421 is a pyridoxal 5'-phosphate binding site.

Belongs to the class-I pyridoxal-phosphate-dependent aminotransferase family. Alanine aminotransferase subfamily. In terms of assembly, homodimer. Requires pyridoxal 5'-phosphate as cofactor.

The protein localises to the mitochondrion matrix. The enzyme catalyses L-alanine + 2-oxoglutarate = pyruvate + L-glutamate. Its pathway is amino-acid degradation; L-alanine degradation via transaminase pathway; pyruvate from L-alanine: step 1/1. In terms of biological role, alanine aminotransferase involved in both alanine biosynthesis and utilization. Under respiratory conditions, constitutes the sole pathway for alanine biosynthesis and catabolism. Under fermentative conditions, it plays a catabolic role and alanine is mainly synthesized through an alternative pathway. The polypeptide is Alanine aminotransferase, mitochondrial (ALT1) (Saccharomyces cerevisiae (strain ATCC 204508 / S288c) (Baker's yeast)).